The sequence spans 275 residues: Small ribosomal subunit protein uS3 (275 aa).

One can recognise a KH type-2 domain in the interval 39–107 (VRIYLKKKLK…PVHVNIEEIR (69 aa)). The tract at residues 216–275 (AAATSAEPAAEEKKTRRAPSKTAARKPAAGTDKPLVAAKPAVKRVRKVETPAADTQKSGE) is disordered.

Belongs to the universal ribosomal protein uS3 family. Part of the 30S ribosomal subunit. Forms a tight complex with proteins S10 and S14.

Binds the lower part of the 30S subunit head. Binds mRNA in the 70S ribosome, positioning it for translation. This Polynucleobacter asymbioticus (strain DSM 18221 / CIP 109841 / QLW-P1DMWA-1) (Polynucleobacter necessarius subsp. asymbioticus) protein is Small ribosomal subunit protein uS3.